The chain runs to 151 residues: Ubiquitin-conjugating enzyme E2 2 (151 aa).

A disordered region spans residues 1–26 (MSTTARRRLMRDFKRMQQDPPQGVSA). A UBC core domain is found at 4–150 (TARRRLMRDF…VRDTVEASWT (147 aa)). The active-site Glycyl thioester intermediate is the Cys-88.

The protein belongs to the ubiquitin-conjugating enzyme family.

It localises to the cytoplasm. It is found in the nucleus. It catalyses the reaction S-ubiquitinyl-[E1 ubiquitin-activating enzyme]-L-cysteine + [E2 ubiquitin-conjugating enzyme]-L-cysteine = [E1 ubiquitin-activating enzyme]-L-cysteine + S-ubiquitinyl-[E2 ubiquitin-conjugating enzyme]-L-cysteine.. It participates in protein modification; protein ubiquitination. Its function is as follows. Catalyzes the covalent attachment of ubiquitin to other proteins. Plays a role in transcription regulation by catalyzing the monoubiquitination of histone H2B to form H2BK123ub1. H2BK123ub1 gives a specific tag for epigenetic transcriptional activation and is also a prerequisite for H3K4me and H3K79me formation. Also involved in postreplication repair of UV-damaged DNA, in N-end rule-dependent protein degradation and in sporulation. In Yarrowia lipolytica (strain CLIB 122 / E 150) (Yeast), this protein is Ubiquitin-conjugating enzyme E2 2 (UBC2).